A 181-amino-acid polypeptide reads, in one-letter code: Adenine phosphoribosyltransferase (181 aa).

Belongs to the purine/pyrimidine phosphoribosyltransferase family. As to quaternary structure, homodimer.

Its subcellular location is the cytoplasm. It carries out the reaction AMP + diphosphate = 5-phospho-alpha-D-ribose 1-diphosphate + adenine. The protein operates within purine metabolism; AMP biosynthesis via salvage pathway; AMP from adenine: step 1/1. Its function is as follows. Catalyzes a salvage reaction resulting in the formation of AMP, that is energically less costly than de novo synthesis. The protein is Adenine phosphoribosyltransferase of Methylorubrum extorquens (strain CM4 / NCIMB 13688) (Methylobacterium extorquens).